Reading from the N-terminus, the 190-residue chain is Crossover junction endodeoxyribonuclease RuvC (190 aa).

Catalysis depends on residues D7, E68, and D141. Mg(2+)-binding residues include D7, E68, and D141.

The protein belongs to the RuvC family. Homodimer which binds Holliday junction (HJ) DNA. The HJ becomes 2-fold symmetrical on binding to RuvC with unstacked arms; it has a different conformation from HJ DNA in complex with RuvA. In the full resolvosome a probable DNA-RuvA(4)-RuvB(12)-RuvC(2) complex forms which resolves the HJ. Mg(2+) is required as a cofactor.

Its subcellular location is the cytoplasm. The catalysed reaction is Endonucleolytic cleavage at a junction such as a reciprocal single-stranded crossover between two homologous DNA duplexes (Holliday junction).. In terms of biological role, the RuvA-RuvB-RuvC complex processes Holliday junction (HJ) DNA during genetic recombination and DNA repair. Endonuclease that resolves HJ intermediates. Cleaves cruciform DNA by making single-stranded nicks across the HJ at symmetrical positions within the homologous arms, yielding a 5'-phosphate and a 3'-hydroxyl group; requires a central core of homology in the junction. The consensus cleavage sequence is 5'-(A/T)TT(C/G)-3'. Cleavage occurs on the 3'-side of the TT dinucleotide at the point of strand exchange. HJ branch migration catalyzed by RuvA-RuvB allows RuvC to scan DNA until it finds its consensus sequence, where it cleaves and resolves the cruciform DNA. In Endomicrobium trichonymphae, this protein is Crossover junction endodeoxyribonuclease RuvC.